A 720-amino-acid polypeptide reads, in one-letter code: Methionine--tRNA ligase (720 aa).

The 'HIGH' region signature appears at 27 to 37; sequence PYANGQIHIGH. Residues Cys-158, Cys-161, Cys-171, and Cys-174 each coordinate Zn(2+). The short motif at 348-352 is the 'KMSKS' region element; sequence KMSKS. Lys-351 serves as a coordination point for ATP. A tRNA-binding domain is found at 614–720; that stretch reads DFAKVDLRIA…SGAKPGMRVK (107 aa).

Belongs to the class-I aminoacyl-tRNA synthetase family. MetG type 1 subfamily. As to quaternary structure, homodimer. It depends on Zn(2+) as a cofactor.

It localises to the cytoplasm. It carries out the reaction tRNA(Met) + L-methionine + ATP = L-methionyl-tRNA(Met) + AMP + diphosphate. Is required not only for elongation of protein synthesis but also for the initiation of all mRNA translation through initiator tRNA(fMet) aminoacylation. The sequence is that of Methionine--tRNA ligase from Burkholderia ambifaria (strain ATCC BAA-244 / DSM 16087 / CCUG 44356 / LMG 19182 / AMMD) (Burkholderia cepacia (strain AMMD)).